The primary structure comprises 158 residues: Small ribosomal subunit protein uS7 (158 aa).

Belongs to the universal ribosomal protein uS7 family. In terms of assembly, part of the 30S ribosomal subunit. Contacts proteins S9 and S11.

Its function is as follows. One of the primary rRNA binding proteins, it binds directly to 16S rRNA where it nucleates assembly of the head domain of the 30S subunit. Is located at the subunit interface close to the decoding center, probably blocks exit of the E-site tRNA. In Azobacteroides pseudotrichonymphae genomovar. CFP2, this protein is Small ribosomal subunit protein uS7.